A 194-amino-acid polypeptide reads, in one-letter code: NADH-quinone oxidoreductase subunit B (194 aa).

Polar residues predominate over residues 1–11; that stretch reads MGMSQNNSTLV. The interval 1–22 is disordered; sequence MGMSQNNSTLVAPQPKGIIDPA. The [4Fe-4S] cluster site is built by C72, C73, C138, and C168.

Belongs to the complex I 20 kDa subunit family. NDH-1 is composed of 14 different subunits. Subunits NuoB, C, D, E, F, and G constitute the peripheral sector of the complex. It depends on [4Fe-4S] cluster as a cofactor.

It localises to the cell inner membrane. It carries out the reaction a quinone + NADH + 5 H(+)(in) = a quinol + NAD(+) + 4 H(+)(out). In terms of biological role, NDH-1 shuttles electrons from NADH, via FMN and iron-sulfur (Fe-S) centers, to quinones in the respiratory chain. The immediate electron acceptor for the enzyme in this species is believed to be ubiquinone. Couples the redox reaction to proton translocation (for every two electrons transferred, four hydrogen ions are translocated across the cytoplasmic membrane), and thus conserves the redox energy in a proton gradient. In Agrobacterium fabrum (strain C58 / ATCC 33970) (Agrobacterium tumefaciens (strain C58)), this protein is NADH-quinone oxidoreductase subunit B.